A 317-amino-acid chain; its full sequence is ADP-L-glycero-D-manno-heptose-6-epimerase (317 aa).

NADP(+) is bound by residues F10–I11, D31–D32, Q38, K53, Q75–S79, and N92. The active-site Proton acceptor is Y139. K143 serves as a coordination point for NADP(+). Residue N166 coordinates substrate. V167 and K175 together coordinate NADP(+). The active-site Proton acceptor is the K175. Substrate contacts are provided by residues G177, H184, F198–V201, R211, and Y275.

The protein belongs to the NAD(P)-dependent epimerase/dehydratase family. HldD subfamily. In terms of assembly, homopentamer. NADP(+) is required as a cofactor.

It carries out the reaction ADP-D-glycero-beta-D-manno-heptose = ADP-L-glycero-beta-D-manno-heptose. The protein operates within nucleotide-sugar biosynthesis; ADP-L-glycero-beta-D-manno-heptose biosynthesis; ADP-L-glycero-beta-D-manno-heptose from D-glycero-beta-D-manno-heptose 7-phosphate: step 4/4. Catalyzes the interconversion between ADP-D-glycero-beta-D-manno-heptose and ADP-L-glycero-beta-D-manno-heptose via an epimerization at carbon 6 of the heptose. This is ADP-L-glycero-D-manno-heptose-6-epimerase from Shewanella frigidimarina (strain NCIMB 400).